Reading from the N-terminus, the 586-residue chain is Estrogen receptor (586 aa).

The tract at residues 1-179 (MTMPLPNKTT…SMESTKETRY (179 aa)) is modulating. The tract at residues 144–173 (FYRSSSDNRRQSGRERMSSANDKGPPSMES) is disordered. Over residues 149 to 160 (SDNRRQSGRERM) the composition is skewed to basic and acidic residues. NR C4-type zinc fingers lie at residues 180–200 (CAVC…CEGC) and 216–240 (CPAT…LRKC). The nuclear receptor DNA-binding region spans 180–245 (CAVCSDYASG…RLRKCYEVGM (66 aa)). The tract at residues 246 to 302 (MKGGIRKDRRGGRLLKHKRQKEEQEQKNDVDPSEIRTASIWVNPSVKSMKLSPVLSL) is hinge. Basic residues predominate over residues 252 to 264 (KDRRGGRLLKHKR). The segment at 252–276 (KDRRGGRLLKHKRQKEEQEQKNDVD) is disordered. The span at 265 to 276 (QKEEQEQKNDVD) shows a compositional bias: basic and acidic residues. Residues 303–539 (TAEQLISALM…DLLLEMLDAH (237 aa)) form the NR LBD domain. Over residues 543–556 (TPKDKTTTQEEDSR) the composition is skewed to basic and acidic residues. The segment at 543–569 (TPKDKTTTQEEDSRSPPTTTVNGASPC) is disordered.

This sequence belongs to the nuclear hormone receptor family. NR3 subfamily. In terms of assembly, binds DNA as a homodimer. Can form a heterodimer with ER-beta.

Its subcellular location is the nucleus. The steroid hormones and their receptors are involved in the regulation of eukaryotic gene expression and affect cellular proliferation and differentiation in target tissues. This chain is Estrogen receptor (esr1), found in Xenopus laevis (African clawed frog).